Reading from the N-terminus, the 290-residue chain is Protoheme IX farnesyltransferase (290 aa).

The next 9 membrane-spanning stretches (helical) occupy residues 8–28 (LTKP…YFLA), 36–56 (LSLL…GCVV), 81–101 (INIE…TGLL), 108–128 (LSAV…TMWY), 133–153 (VYGT…GYLA), 163–183 (VLLF…IAMF), 209–229 (IMIY…FGHT), 230–247 (GYEY…WFKV), and 270–290 (LAIT…SITF).

Belongs to the UbiA prenyltransferase family. Protoheme IX farnesyltransferase subfamily.

The protein localises to the cell inner membrane. The enzyme catalyses heme b + (2E,6E)-farnesyl diphosphate + H2O = Fe(II)-heme o + diphosphate. It functions in the pathway porphyrin-containing compound metabolism; heme O biosynthesis; heme O from protoheme: step 1/1. In terms of biological role, converts heme B (protoheme IX) to heme O by substitution of the vinyl group on carbon 2 of heme B porphyrin ring with a hydroxyethyl farnesyl side group. This chain is Protoheme IX farnesyltransferase, found in Aliivibrio salmonicida (strain LFI1238) (Vibrio salmonicida (strain LFI1238)).